A 367-amino-acid polypeptide reads, in one-letter code: Flagellar P-ring protein (367 aa).

The first 18 residues, Met-1 to Ala-18, serve as a signal peptide directing secretion.

The protein belongs to the FlgI family. In terms of assembly, the basal body constitutes a major portion of the flagellar organelle and consists of four rings (L,P,S, and M) mounted on a central rod.

It localises to the periplasm. The protein localises to the bacterial flagellum basal body. Assembles around the rod to form the L-ring and probably protects the motor/basal body from shearing forces during rotation. In Rhizorhabdus wittichii (strain DSM 6014 / CCUG 31198 / JCM 15750 / NBRC 105917 / EY 4224 / RW1) (Sphingomonas wittichii), this protein is Flagellar P-ring protein.